Consider the following 248-residue polypeptide: MIINTAAYQFVTIQDPQTLADGVRAQAEQHALKGSVLVAEEGINLFLAGAAEQIGAFYAWLQADARFAQMRIKYSESAHQPFARLKVKIKPEIISFRRDDASPLQGRAPSVTPAVLREWLRNGQDDRGRPLVLLDTRNAQEVAYGTFQGALTLPIDKFTDLPGALEPHRGALADATVVSFCTGGIRCEKAALWMQADGMDNVLQLEGGILGYFEEVGGEGYEGRCFVFDERVALDPELKPLVDADRTA.

The 95-residue stretch at 127–221 (RGRPLVLLDT…YFEEVGGEGY (95 aa)) folds into the Rhodanese domain. C181 (cysteine persulfide intermediate) is an active-site residue.

Belongs to the TrhO family.

The catalysed reaction is uridine(34) in tRNA + AH2 + O2 = 5-hydroxyuridine(34) in tRNA + A + H2O. Catalyzes oxygen-dependent 5-hydroxyuridine (ho5U) modification at position 34 in tRNAs. This Xanthomonas euvesicatoria pv. vesicatoria (strain 85-10) (Xanthomonas campestris pv. vesicatoria) protein is tRNA uridine(34) hydroxylase.